Here is a 323-residue protein sequence, read N- to C-terminus: UDP-glucuronate 4-epimerase (323 aa).

An NAD(+)-binding site is contributed by 11 to 13 (GFI). The active-site Proton acceptor is Tyr-152. Lys-156 contacts NAD(+).

This sequence belongs to the NAD(P)-dependent epimerase/dehydratase family. NAD(+) is required as a cofactor.

It carries out the reaction UDP-alpha-D-glucuronate = UDP-alpha-D-galacturonate. In terms of biological role, catalyzes the interconversion of UDP-D-glucuronic acid (UDP-GlcA) and UDP-D-galacturonic acid (UDP-GalA). The polypeptide is UDP-glucuronate 4-epimerase (Thermodesulfobacterium geofontis (strain OPF15)).